A 68-amino-acid polypeptide reads, in one-letter code: Pantinin-3 (68 aa).

The signal sequence occupies residues 1-23 (MKTQFAILLIALVLFQLLSQSDA). L36 carries the post-translational modification Leucine amide. Residues 40 to 68 (GLNELDNLDELFDGEISQADIDFLKELMS) constitute a propeptide that is removed on maturation.

Belongs to the non-disulfide-bridged peptide (NDBP) superfamily. Short antimicrobial peptide (group 4) family. As to expression, expressed by the venom gland.

The protein localises to the secreted. Its subcellular location is the target cell membrane. Functionally, amphipathic peptide that possesses relatively strong activities against Gram-positive bacteria and a fungus, but has very weak antimicrobial activities against Gram-negative bacteria. Also exhibits mild hemolytic activities against human erythrocytes (16 uM induce 70% of hemolysis). Furthermore, this peptide potently inhibits the growth of vancomycin-resistant Enterococcus (VRE) S13, a pathogen that can cause a number of human infections. Minimal inhibitory concentration (MIC) are the following: 16 uM against S.aureus, 6 uM against B.magaterium, 8 uM against M.luteus, 4 uM against VRE, 12 uM against methicillin-resistant S.aureus, 36 uM against E.coli, &gt;87 uM against P.putida, 87 uM against K.oxytoca, &gt;87 uM against E.cloacae, 84 uM against S.enterica and 17 uM against the fungus C.tropicalis. The polypeptide is Pantinin-3 (Pandinus imperator (Emperor scorpion)).